Consider the following 368-residue polypeptide: MSSESDTDTEDEIARERLIELASDFYDQFAEGEVPTMEIPTRTKSNIVFDEDKDVWVYGDRTSTRSANSVRGAQKLLKAIYTIEFLADQLEQGRSSTLRELYYLSESWDEERAQFNDQDESNQLVEDLEIVSKVTREDFHMRPEESGATIMGPLYLREQTRRGEREIHCQKDVGEGGYQIPNNPDTIEFLDNDADFVLCVETGGMRDRLVENGFDEEHNVIIVHLKGQPARATRRITKRLHDDLDLPVVVFCDGDPWSYRIYASVAYGSIKSAHLSEYLATPEAEYIGIQPADIVEYDLPTDPLSDSDINALESELDDPRFQDDYWREQIELQLDIGKKAEQQALASRGLDFVTETYLPERLGEMGVL.

The region spanning 9-148 (TEDEIARERL…FHMRPEESGA (140 aa)) is the Topo IIA-type catalytic domain. Tyrosine 103 acts as the O-(5'-phospho-DNA)-tyrosine intermediate in catalysis. 2 residues coordinate Mg(2+): glutamate 201 and aspartate 253.

Belongs to the TOP6A family. In terms of assembly, homodimer. Heterotetramer of two Top6A and two Top6B chains. Requires Mg(2+) as cofactor.

It carries out the reaction ATP-dependent breakage, passage and rejoining of double-stranded DNA.. Relaxes both positive and negative superturns and exhibits a strong decatenase activity. The sequence is that of Type 2 DNA topoisomerase 6 subunit A from Natronomonas pharaonis (strain ATCC 35678 / DSM 2160 / CIP 103997 / JCM 8858 / NBRC 14720 / NCIMB 2260 / Gabara) (Halobacterium pharaonis).